The following is a 464-amino-acid chain: MMARRDPKSWAKRLVRAQTLQKQRRAPVGPRSPPPDEEDPRLKCKNCGAFGHTARSTRCPMKCWKAALVPATLGKKEGKENLKPWKPRAEANPGPLNKDKGEKEERPRQQDPQRKALLHMFSGKPPEKPLPNGKGSTESSDYLRVASGPMPVHTTSKRPRLDPVLADRSATEMSGRGSVLASLSPLRKASLSSSSSLGPKERQTGAAADMPQPAVRHQGREPLLVVKPTHSRPEGGCREVPQAASKTHGLLQAARPQAQDKRPAVTPQPCPPAATHSLGLGSNLSFGPGAKRPAQAPIQACLNFPKKPRLGPFQIPESAIQGGELGAPENLQPPPAATELGPSTSPQMGRRTPAQVPSVDRQPPHSRPCLPTAQACTMSHHPAASHDGAQPLRVLFRRLENGRWSSSLLAAPSFHSPEKPGAFLAQSPHVSEKSEAPCVRVPPSVLYEDLQVSSSSEDSDSDLE.

Disordered regions lie at residues 1 to 42, 69 to 389, and 415 to 437; these read MMAR…DPRL, VPAT…HDGA, and HSPE…SEAP. Basic and acidic residues-rich tracts occupy residues 74–89 and 97–114; these read GKKE…KPRA and NKDK…DPQR. Positions 180–197 are enriched in low complexity; it reads LASLSPLRKASLSSSSSL.

This sequence belongs to the FAM90 family.

The sequence is that of Protein FAM90A23 from Homo sapiens (Human).